The chain runs to 178 residues: CDP-archaeol synthase (178 aa).

5 helical membrane-spanning segments follow: residues 3–23 (LLLLLFSALWYILPAYVANAV), 56–76 (FFGILFGIITGILQHFIVILY), 91–111 (IILSFLLATGALFGDMLGSFI), 131–151 (FIIFALLFAYSLYPVPANIIV), and 152–172 (LLLVISPIIHFSSNIIAYKLH).

It belongs to the CDP-archaeol synthase family. Mg(2+) serves as cofactor.

It is found in the cell membrane. The catalysed reaction is 2,3-bis-O-(geranylgeranyl)-sn-glycerol 1-phosphate + CTP + H(+) = CDP-2,3-bis-O-(geranylgeranyl)-sn-glycerol + diphosphate. It participates in membrane lipid metabolism; glycerophospholipid metabolism. Its function is as follows. Catalyzes the formation of CDP-2,3-bis-(O-geranylgeranyl)-sn-glycerol (CDP-archaeol) from 2,3-bis-(O-geranylgeranyl)-sn-glycerol 1-phosphate (DGGGP) and CTP. This reaction is the third ether-bond-formation step in the biosynthesis of archaeal membrane lipids. The polypeptide is CDP-archaeol synthase (Methanococcus maripaludis (strain DSM 14266 / JCM 13030 / NBRC 101832 / S2 / LL)).